A 382-amino-acid chain; its full sequence is Bestrophin-6 (382 aa).

A run of 4 helical transmembrane segments spans residues 29–49, 68–88, 231–251, and 265–285; these read WKLI…VLAI, FINF…TTIV, LAYP…CAFA, and VIHY…MGWL.

It belongs to the anion channel-forming bestrophin (TC 1.A.46) family. Calcium-sensitive chloride channel subfamily.

The protein resides in the membrane. This chain is Bestrophin-6 (best-6), found in Caenorhabditis elegans.